The chain runs to 206 residues: Protein PH0010 (206 aa).

The 195-residue stretch at 8-202 folds into the AMMECR1 domain; sequence EWGEFLVRLA…EEYPRGPIKR (195 aa).

The polypeptide is Protein PH0010 (Pyrococcus horikoshii (strain ATCC 700860 / DSM 12428 / JCM 9974 / NBRC 100139 / OT-3)).